The primary structure comprises 211 residues: Proteasome subunit beta 2 (211 aa).

Positions 1–17 are cleaved as a propeptide — removed in mature form; by autocatalysis; sequence MVIMGNELQLENKILKG. Thr-18 serves as the catalytic Nucleophile.

It belongs to the peptidase T1B family. As to quaternary structure, the 20S proteasome core is composed of 14 alpha and 14 beta subunits that assemble into four stacked heptameric rings, resulting in a barrel-shaped structure. The two inner rings, each composed of seven catalytic beta subunits, are sandwiched by two outer rings, each composed of seven alpha subunits. The catalytic chamber with the active sites is on the inside of the barrel. Has a gated structure, the ends of the cylinder being occluded by the N-termini of the alpha-subunits. Is capped at one or both ends by the proteasome regulatory ATPase, PAN.

The protein resides in the cytoplasm. The catalysed reaction is Cleavage of peptide bonds with very broad specificity.. The formation of the proteasomal ATPase PAN-20S proteasome complex, via the docking of the C-termini of PAN into the intersubunit pockets in the alpha-rings, triggers opening of the gate for substrate entry. Interconversion between the open-gate and close-gate conformations leads to a dynamic regulation of the 20S proteasome proteolysis activity. Functionally, component of the proteasome core, a large protease complex with broad specificity involved in protein degradation. The chain is Proteasome subunit beta 2 from Saccharolobus solfataricus (strain 98/2) (Sulfolobus solfataricus).